The sequence spans 520 residues: Ribonuclease Y (520 aa).

The helical transmembrane segment at 3–23 (FILVLCTVSSLFVGGGTGIFL) threads the bilayer. Residues 209 to 272 (TVTAVTLPSE…QVAKMALERL (64 aa)) enclose the KH domain. Positions 335–429 (VLRHSIEVAS…VQASDCLSGA (95 aa)) constitute an HD domain.

This sequence belongs to the RNase Y family.

It is found in the cell membrane. Functionally, endoribonuclease that initiates mRNA decay. The protein is Ribonuclease Y of Lawsonia intracellularis (strain PHE/MN1-00).